Consider the following 379-residue polypeptide: Cytochrome b (379 aa).

4 consecutive transmembrane segments (helical) span residues 33–53 (FGSLLGLCLIAQILTGLFLAM), 77–98 (WLIRNMHANGASFFFICIYLHI), 113–133 (WNVGVVLLLLVMMTAFVGYVL), and 178–198 (FFAFHFLLPFIGAAATLVHLI). The heme b site is built by H83 and H97. 2 residues coordinate heme b: H182 and H196. H201 is an a ubiquinone binding site. 4 helical membrane passes run 226 to 246 (YKDILGFTFLLTALIALALFS), 288 to 308 (LGGVLALLASILVLMVVPLLH), 320 to 340 (FTQVLFWLLIADVAILTWIGG), and 347 to 367 (FIIIGQVASFLYFSLFLVLAP).

Belongs to the cytochrome b family. In terms of assembly, the cytochrome bc1 complex contains 3 respiratory subunits (MT-CYB, CYC1 and UQCRFS1), 2 core proteins (UQCRC1 and UQCRC2) and probably 6 low-molecular weight proteins. Requires heme b as cofactor.

It is found in the mitochondrion inner membrane. In terms of biological role, component of the ubiquinol-cytochrome c reductase complex (complex III or cytochrome b-c1 complex) that is part of the mitochondrial respiratory chain. The b-c1 complex mediates electron transfer from ubiquinol to cytochrome c. Contributes to the generation of a proton gradient across the mitochondrial membrane that is then used for ATP synthesis. The protein is Cytochrome b (mt-cyb) of Poeciliopsis occidentalis (Gila topminnow).